Consider the following 274-residue polypeptide: Secreted RxLR effector protein 40 (274 aa).

The N-terminal stretch at 1-21 (MRLYTQVVAASLVATLAIVDS) is a signal peptide. Positions 35–53 (RFLRQDNATVARVSEDGER) match the RxLR-dEER motif. N-linked (GlcNAc...) asparagine glycosylation is found at N41, N74, and N258.

Belongs to the RxLR effector family.

Its subcellular location is the secreted. The protein localises to the host nucleus. The protein resides in the host cytoplasm. Functionally, secreted effector that completely suppresses the host cell death induced by cell death-inducing proteins. This is Secreted RxLR effector protein 40 from Plasmopara viticola (Downy mildew of grapevine).